The sequence spans 260 residues: Thiamine thiazole synthase (260 aa).

NAD(+) contacts are provided by residues alanine 36, 55–56, glycine 63, and 154–156; these read EQ and HVD. Residues aspartate 156 and histidine 171 each coordinate Fe cation. NAD(+) is bound at residue methionine 224. Glycine is bound at residue arginine 234.

It belongs to the THI4 family. In terms of assembly, homooctamer; tetramer of dimers. Fe(2+) is required as a cofactor.

The catalysed reaction is hydrogen sulfide + glycine + NAD(+) = ADP-5-ethyl-4-methylthiazole-2-carboxylate + nicotinamide + 3 H2O + H(+). The protein operates within cofactor biosynthesis; thiamine diphosphate biosynthesis. Its function is as follows. Involved in the biosynthesis of the thiazole moiety of thiamine. Catalyzes the conversion of NAD and glycine to adenosine diphosphate 5-(2-hydroxyethyl)-4-methylthiazole-2-carboxylate (ADT), an adenylated thiazole intermediate, using free sulfide as a source of sulfur. In Methanosarcina acetivorans (strain ATCC 35395 / DSM 2834 / JCM 12185 / C2A), this protein is Thiamine thiazole synthase.